We begin with the raw amino-acid sequence, 357 residues long: 3-dehydroquinate synthase (357 aa).

NAD(+)-binding positions include 99–103, 123–124, Lys-135, Lys-144, and 162–165; these read GATGD, TT, and FLET. Positions 177, 247, and 261 each coordinate Zn(2+).

Belongs to the sugar phosphate cyclases superfamily. Dehydroquinate synthase family. The cofactor is Co(2+). Zn(2+) is required as a cofactor. NAD(+) serves as cofactor.

Its subcellular location is the cytoplasm. The catalysed reaction is 7-phospho-2-dehydro-3-deoxy-D-arabino-heptonate = 3-dehydroquinate + phosphate. Its pathway is metabolic intermediate biosynthesis; chorismate biosynthesis; chorismate from D-erythrose 4-phosphate and phosphoenolpyruvate: step 2/7. Its function is as follows. Catalyzes the conversion of 3-deoxy-D-arabino-heptulosonate 7-phosphate (DAHP) to dehydroquinate (DHQ). In Macrococcus caseolyticus (strain JCSC5402) (Macrococcoides caseolyticum), this protein is 3-dehydroquinate synthase.